The primary structure comprises 257 residues: uncharacterized protein (257 aa).

Residues S122 and H236 each act as charge relay system in the active site.

This sequence belongs to the peptidase S9B family.

This is an uncharacterized protein from Bacillus subtilis (strain 168).